Consider the following 934-residue polypeptide: Serine/threonine-protein kinase PknD (934 aa).

Residues 4 to 296 (YELIRLIGKG…ELRQALQPYL (293 aa)) enclose the Protein kinase domain. Residues 10–18 (IGKGGMGEV) and K33 each bind ATP. The active-site Proton acceptor is D138.

This sequence belongs to the protein kinase superfamily. Ser/Thr protein kinase family. As to quaternary structure, interacts with Pkn1. Post-translationally, autophosphorylated on serine and threonine residues. Present in elementary bodies 40 hours post-infection as 2 bands of approximately 55 to 60 and 45 to 50 kDa, which may be due to differential phosphorylation as well as degradation; an enzymatically active full-length protein can also be detected.

The enzyme catalyses L-seryl-[protein] + ATP = O-phospho-L-seryl-[protein] + ADP + H(+). It catalyses the reaction L-threonyl-[protein] + ATP = O-phospho-L-threonyl-[protein] + ADP + H(+). In terms of biological role, together with the serine/threonine kinase Pkn1, may play a role in the specific interactions with host proteins during intracellular growth. Autophosphorylates and also phosphorylates Pkn1. The sequence is that of Serine/threonine-protein kinase PknD from Chlamydia trachomatis serovar L2 (strain ATCC VR-902B / DSM 19102 / 434/Bu).